Here is a 208-residue protein sequence, read N- to C-terminus: Protein JLP2 (208 aa).

Residues 185–194 show a composition bias toward basic residues; the sequence is AKKNQKKKNK. Positions 185-208 are disordered; sequence AKKNQKKKNKQSKDEVTDDMQLEV.

It belongs to the CCDC25 family.

It is found in the cytoplasm. This Saccharomyces cerevisiae (strain ATCC 204508 / S288c) (Baker's yeast) protein is Protein JLP2 (JLP2).